Here is a 228-residue protein sequence, read N- to C-terminus: Calcyclin-binding protein (228 aa).

Residue methionine 1 is modified to N-acetylmethionine. An N-acetylalanine modification is found at alanine 2. The segment at alanine 2 to tryptophan 80 is interaction with SIAH1. Serine 3 is subject to Phosphoserine. N6-acetyllysine occurs at positions 8 and 19. Serine 34 carries the post-translational modification Phosphoserine. The region spanning valine 73–threonine 167 is the CS domain. Residues valine 73–phenylalanine 228 form an interaction with SKP1 region. 2 positions are modified to N6-acetyllysine: lysine 85 and lysine 118. The interaction with S100A6 stretch occupies residues cysteine 154–phenylalanine 228. The region spanning glutamine 168–phenylalanine 228 is the SGS domain.

Homodimer. Interacts with proteins of the S100 family S100A1, S100A6, S100B, S100P and S100A12 in a calcium-dependent manner. Component of some large E3 complex at least composed of UBE2D1, SIAH1, CACYBP/SIP, SKP1, APC and TBL1X. Interacts directly with SIAH1, SIAH2 and SKP1. In terms of processing, phosphorylated on serine residues. Phosphorylated upon induction by RA or at high calcium concentrations.

The protein localises to the nucleus. It localises to the cytoplasm. Functionally, may be involved in calcium-dependent ubiquitination and subsequent proteasomal degradation of target proteins. Probably serves as a molecular bridge in ubiquitin E3 complexes. Participates in the ubiquitin-mediated degradation of beta-catenin (CTNNB1). This is Calcyclin-binding protein (CACYBP) from Homo sapiens (Human).